A 161-amino-acid polypeptide reads, in one-letter code: Putative 4-hydroxy-4-methyl-2-oxoglutarate aldolase (161 aa).

Substrate is bound by residues Gly-77–Leu-80 and Arg-99. A divalent metal cation is bound at residue Asp-100.

The protein belongs to the class II aldolase/RraA-like family. As to quaternary structure, homotrimer. The cofactor is a divalent metal cation.

It catalyses the reaction 4-hydroxy-4-methyl-2-oxoglutarate = 2 pyruvate. The enzyme catalyses oxaloacetate + H(+) = pyruvate + CO2. Catalyzes the aldol cleavage of 4-hydroxy-4-methyl-2-oxoglutarate (HMG) into 2 molecules of pyruvate. Also contains a secondary oxaloacetate (OAA) decarboxylase activity due to the common pyruvate enolate transition state formed following C-C bond cleavage in the retro-aldol and decarboxylation reactions. The sequence is that of Putative 4-hydroxy-4-methyl-2-oxoglutarate aldolase from Methylococcus capsulatus (strain ATCC 33009 / NCIMB 11132 / Bath).